The chain runs to 30 residues: Babycurus-toxin 1 (30 aa).

The LCN-type CS-alpha/beta domain occupies 2-30 (KDGYPTNSKGCKISGCLPGENKFCLNECQ).

This sequence belongs to the long (4 C-C) scorpion toxin superfamily. Sodium channel inhibitor family. In terms of tissue distribution, expressed by the venom gland.

Its subcellular location is the secreted. Functionally, binds to sodium channels (Nav) and inhibits both the activation and inactivation of the activated channels, thereby blocking neuronal transmission. The polypeptide is Babycurus-toxin 1 (Babycurus centrurimorphus (East African scorpion)).